A 274-amino-acid chain; its full sequence is Long chain fatty acid elongase 2 (274 aa).

The next 7 membrane-spanning stretches (helical) occupy residues 29-49 (MSTF…TIYF), 73-93 (FSLF…GVFM), 115-135 (FWGW…MFLV), 140-160 (PVIF…VVTY), 170-190 (SLAL…VRAL), 201-221 (FITT…GHLV), and 238-258 (VLSI…KFFY).

Belongs to the ELO family. Expressed in various tissues and parts of the body, including the ventral cord, pharyngeal muscles, uterus, and the tail, and most strongly in intestinal cells.

It is found in the membrane. It carries out the reaction hexadecanoyl-CoA + malonyl-CoA + H(+) = 3-oxooctadecanoyl-CoA + CO2 + CoA. It functions in the pathway lipid metabolism; fatty acid biosynthesis. Catalyzes the first and rate-limiting reaction of the four reactions that constitute the long-chain fatty acids elongation cycle. Uses malonyl-CoA to add 2 carbons per cycle to the chain of long-chain fatty acids. Condensing enzyme responsible for the elongation of palmitate (hexadecanoate, 16:0), also involved in polyunsaturated fatty acid (PUFA) biosynthesis. This is Long chain fatty acid elongase 2 from Caenorhabditis elegans.